Consider the following 572-residue polypeptide: Urease subunit alpha (572 aa).

Residues 136 to 572 (GGIDTHIHFI…VPLGQRYFLF (437 aa)) form the Urease domain. Ni(2+)-binding residues include histidine 141, histidine 143, and lysine 224. Lysine 224 bears the N6-carboxylysine mark. Substrate is bound at residue histidine 226. Ni(2+)-binding residues include histidine 253 and histidine 279. The active-site Proton donor is histidine 327. Aspartate 367 contributes to the Ni(2+) binding site.

Belongs to the metallo-dependent hydrolases superfamily. Urease alpha subunit family. Heterotrimer of UreA (gamma), UreB (beta) and UreC (alpha) subunits. Three heterotrimers associate to form the active enzyme. Ni cation serves as cofactor. Post-translationally, carboxylation allows a single lysine to coordinate two nickel ions.

Its subcellular location is the cytoplasm. The catalysed reaction is urea + 2 H2O + H(+) = hydrogencarbonate + 2 NH4(+). It functions in the pathway nitrogen metabolism; urea degradation; CO(2) and NH(3) from urea (urease route): step 1/1. The sequence is that of Urease subunit alpha from Haemophilus influenzae (strain 86-028NP).